A 161-amino-acid polypeptide reads, in one-letter code: NADH:FMN oxidoreductase (161 aa).

Residues aspartate 30, 37 to 40 (AAST), 54 to 61 (CVQNSSTT), alanine 88, arginine 94, and phenylalanine 151 contribute to the FMN site.

This sequence belongs to the non-flavoprotein flavin reductase family.

Its subcellular location is the cytoplasm. The catalysed reaction is FMNH2 + NAD(+) = FMN + NADH + 2 H(+). The enzyme catalyses FADH2 + NAD(+) = FAD + NADH + 2 H(+). Its pathway is sulfur metabolism; dibenzothiophene degradation. In terms of biological role, an NADH:FMN oxidoreductase which supplies reduced FMN for the '4S' desulfurization pathway that removes covalently bound sulfur from dibenzothiophene (DBT) without breaking carbon-carbon bonds. Can also use FAD. Provides DszC and probably also DszA (DBT-monooxygenase and DBTO2-monooxygenase respectively) with reduced flavin (FMN and/or FAD). This chain is NADH:FMN oxidoreductase, found in Mycolicibacterium goodii (Mycobacterium goodii).